The following is a 190-amino-acid chain: Lipid A acyltransferase PagP (190 aa).

Residues 1-18 (MKRLISCLTIICALNASA) form the signal peptide. Residues His-60, Asp-103, and Ser-104 contribute to the active site.

This sequence belongs to the lipid A palmitoyltransferase family. Homodimer.

The protein localises to the cell outer membrane. It catalyses the reaction a lipid A + a 1,2-diacyl-sn-glycero-3-phosphocholine = a hepta-acyl lipid A + a 2-acyl-sn-glycero-3-phosphocholine. The enzyme catalyses a lipid IVA + a 1,2-diacyl-sn-glycero-3-phosphocholine = a lipid IVB + a 2-acyl-sn-glycero-3-phosphocholine. The catalysed reaction is a lipid IIA + a 1,2-diacyl-sn-glycero-3-phosphocholine = a lipid IIB + a 2-acyl-sn-glycero-3-phosphocholine. Functionally, transfers a fatty acid residue from the sn-1 position of a phospholipid to the N-linked hydroxyfatty acid chain on the proximal unit of lipid A or its precursors. The sequence is that of Lipid A acyltransferase PagP from Legionella pneumophila subsp. pneumophila (strain Philadelphia 1 / ATCC 33152 / DSM 7513).